We begin with the raw amino-acid sequence, 95 residues long: Glycophorin-C (95 aa).

At 1-25 (MSSPVRTPPPERLEPNPGMSYAVME) the chain is on the extracellular side. Residues 26–46 (IAIIAAVITAVALVLVCLLFL) form a helical; Signal-anchor for type III membrane protein membrane-spanning segment. At 47–95 (MLRYLYRHKGTYYTNEAKGTEFAESADAALQSDPALQDAGDTSKKEYFI) the chain is on the cytoplasmic side. Phosphoserine occurs at positions 71, 78, and 89.

The protein belongs to the glycophorin-C family.

It localises to the cell membrane. This is Glycophorin-C (Gypc) from Rattus norvegicus (Rat).